Consider the following 107-residue polypeptide: Replication initiation control protein YabA (107 aa).

Zn(2+)-binding residues include His-81, Cys-83, Cys-97, and Cys-100.

Belongs to the YabA family. Homotetramer. Interacts with both DnaA and DnaN, acting as a bridge between these two proteins. It depends on Zn(2+) as a cofactor.

Its subcellular location is the cytoplasm. The protein localises to the nucleoid. In terms of biological role, involved in control of chromosome replication initiation. Inhibits the cooperative binding of DnaA to the oriC region, thus negatively regulating initiation of chromosome replication. Inhibits the ability of DnaA-ATP to form a helix on DNA; does not disassemble preformed DnaA-DNA helices. Decreases the residence time of DnaA on the chromosome at its binding sites (oriC, replication forks and promoter-binding sites). Tethers DnaA to the replication machinery via the DNA polymerase beta sliding clamp subunit (dnaN). Associates with oriC and other DnaA targets on the chromosome in a DnaA-dependent manner. The protein is Replication initiation control protein YabA of Streptococcus pyogenes serotype M18 (strain MGAS8232).